Consider the following 489-residue polypeptide: Male-specific lethal 1-like 1 (489 aa).

2 disordered regions span residues 126 to 164 (PMVSNDNNQQREGEQVGAMVGDSSPEDSPSGKHWNVRKG) and 224 to 311 (VKKD…EDMQ). The stretch at 179-227 (LLLQLELIEQQQKHLHNKNKEIEDLKAEKEMLMARIERMEHRLQMVKKD) forms a coiled coil. The PEHE domain occupies 347 to 466 (TVEVPSWRES…LKQQDFDLPW (120 aa)). The interval 371–389 (ECLDDSVFLKRHSKLELDE) is interaction with KAT8 HAT domain. A Bipartite nuclear localization signal motif is present at residues 380–394 (KRHSKLELDEKRRKR).

It belongs to the msl-1 family. In terms of assembly, component of a multisubunit histone acetyltransferase complex (MSL). Interacts (via PEHE domain) with KAT8 (via HAT domain) and MSL3 (via MRG domain); both interactions are direct.

It localises to the nucleus. The protein resides in the nucleoplasm. It is found in the nucleus speckle. Its function is as follows. Component of histone acetyltransferase complex. Within MSL complex, promotes ubiquitination of histone H2B. This chain is Male-specific lethal 1-like 1 (msl1l1), found in Danio rerio (Zebrafish).